A 140-amino-acid chain; its full sequence is Small ribosomal subunit protein uS12 (140 aa).

D103 carries the 3-methylthioaspartic acid modification. Residues 120–140 (GVQKRMQARSKYGAKRPKKGK) are disordered. The span at 125–140 (MQARSKYGAKRPKKGK) shows a compositional bias: basic residues.

It belongs to the universal ribosomal protein uS12 family. As to quaternary structure, part of the 30S ribosomal subunit. Contacts proteins S8 and S17. May interact with IF1 in the 30S initiation complex.

Functionally, with S4 and S5 plays an important role in translational accuracy. Its function is as follows. Interacts with and stabilizes bases of the 16S rRNA that are involved in tRNA selection in the A site and with the mRNA backbone. Located at the interface of the 30S and 50S subunits, it traverses the body of the 30S subunit contacting proteins on the other side and probably holding the rRNA structure together. The combined cluster of proteins S8, S12 and S17 appears to hold together the shoulder and platform of the 30S subunit. In Desulfitobacterium hafniense (strain Y51), this protein is Small ribosomal subunit protein uS12.